A 508-amino-acid polypeptide reads, in one-letter code: CBL-interacting protein kinase 19 (508 aa).

The tract at residues 1 to 24 (MAATPPSSQHRRPLSSSASAASLA) is disordered. Positions 14–24 (LSSSASAASLA) are enriched in low complexity. The 255-residue stretch at 37–291 (YELGRLLGHG…VKEVMESRWF (255 aa)) folds into the Protein kinase domain. Residues 43–51 (LGHGTFAKV) and K66 contribute to the ATP site. The active-site Proton acceptor is the D159. Residues 177–206 (DFGLSAVADQFHPDGLLHTFCGTPSYVAPE) are activation loop. The segment at 311–372 (ADGDNDMPEL…EERRQRPLGS (62 aa)) is disordered. Acidic residues predominate over residues 313–322 (GDNDMPELEP). Over residues 323–337 (SEPPPPPPFPPPPPQ) the composition is skewed to pro residues. The segment covering 338–347 (QDDDGEESGW) has biased composition (acidic residues). Positions 354-398 (ASCPATLSSEERRQRPLGSLTRPASLNAFDIISFSKGFDLSGLFE) constitute an NAF domain. The PPI stretch occupies residues 401–430 (GSEVRFISAEPMQTIITKLEEIAKVKSFFV).

The protein belongs to the protein kinase superfamily. CAMK Ser/Thr protein kinase family. SNF1 subfamily. It depends on Mn(2+) as a cofactor. Autophosphorylated. As to expression, expressed in roots, leaf blades and sheaths and panicles.

The catalysed reaction is L-seryl-[protein] + ATP = O-phospho-L-seryl-[protein] + ADP + H(+). The enzyme catalyses L-threonyl-[protein] + ATP = O-phospho-L-threonyl-[protein] + ADP + H(+). CIPK serine-threonine protein kinases interact with CBL proteins. Binding of a CBL protein to the regulatory NAF domain of CIPK protein lead to the activation of the kinase in a calcium-dependent manner. This Oryza sativa subsp. japonica (Rice) protein is CBL-interacting protein kinase 19 (CIPK19).